The primary structure comprises 1242 residues: DNA polymerase catalytic subunit (1242 aa).

Disordered stretches follow at residues 14-38, 644-665, and 1109-1162; these read GAVA…RPPQ, LQSA…SSSS, and APQG…RKPP. Over residues 653-665 the composition is skewed to low complexity; the sequence is GVSPGSGSNSSSS. Positions 1111–1125 are enriched in polar residues; it reads QGSSDNGDSVTTGVV. The span at 1145–1155 shows a compositional bias: basic and acidic residues; the sequence is ESNRRGGEPAK.

Belongs to the DNA polymerase type-B family. In terms of assembly, forms a complex with the ssDNA-binding protein UL57, the DNA polymerase processivity factor UL44, and the alkaline exonuclease UL98. Interacts with the putative helicase-primase complex composed of UL70, UL102 and UL105 proteins; these interactions may coordinate leading and lagging strand DNA synthesis at the replication fork.

Its subcellular location is the host nucleus. It catalyses the reaction DNA(n) + a 2'-deoxyribonucleoside 5'-triphosphate = DNA(n+1) + diphosphate. Its function is as follows. Replicates viral genomic DNA in the late phase of lytic infection, producing long concatemeric DNA. The replication complex is composed of six viral proteins: the DNA polymerase, processivity factor, primase, primase-associated factor, helicase, and ssDNA-binding protein. The protein is DNA polymerase catalytic subunit (UL54) of Homo sapiens (Human).